The primary structure comprises 382 residues: ATP phosphoribosyltransferase regulatory subunit (382 aa).

This sequence belongs to the class-II aminoacyl-tRNA synthetase family. HisZ subfamily. Heteromultimer composed of HisG and HisZ subunits.

It is found in the cytoplasm. The protein operates within amino-acid biosynthesis; L-histidine biosynthesis; L-histidine from 5-phospho-alpha-D-ribose 1-diphosphate: step 1/9. Required for the first step of histidine biosynthesis. May allow the feedback regulation of ATP phosphoribosyltransferase activity by histidine. The polypeptide is ATP phosphoribosyltransferase regulatory subunit (Burkholderia ambifaria (strain MC40-6)).